A 198-amino-acid polypeptide reads, in one-letter code: Cyclotides mra4/mra5 (198 aa).

An N-terminal signal peptide occupies residues 1–22 (MESNKMVVGVLLIAAFALPALA). Positions 23–79 (LFERDVITHETIEAVLKKSTPNSNTMLQEDAINALTGKTLISQTILEETLLKNGVVG) are excised as a propeptide. 3 cysteine pairs are disulfide-bonded: Cys-84–Cys-100, Cys-88–Cys-102, and Cys-93–Cys-107. The propeptide occupies 111–163 (SLALPTLEKDVITPEALEAVLKSNGGAIVNTKTIISNAIFEETLLNNANHVLG). Intrachain disulfides connect Cys-167–Cys-183, Cys-171–Cys-185, and Cys-176–Cys-190. Positions 194–198 (SLALN) are excised as a propeptide.

Belongs to the cyclotide family. Bracelet subfamily. In terms of processing, these are cyclic peptides. Post-translationally, the mature peptides contain 3 disulfide bonds each.

Its function is as follows. Probably participates in a plant defense mechanism. The protein is Cyclotides mra4/mra5 of Melicytus ramiflorus (Whitey wood).